The following is a 708-amino-acid chain: Exocyst complex component 5 (708 aa).

N-acetylalanine is present on Ala-2. A coiled-coil region spans residues 40–101 (KRLLEEFVNH…AFQHFQELDE (62 aa)). 3 positions are modified to phosphothreonine: Thr-122, Thr-395, and Thr-405. Ser-412 is modified (phosphoserine).

It belongs to the SEC10 family. The exocyst complex is composed of EXOC1, EXOC2, EXOC3, EXOC4, EXOC5, EXOC6, EXOC7 and EXOC8. Interacts with EXOC3L1. In terms of tissue distribution, ubiquitous.

Its subcellular location is the cytoplasm. The protein localises to the midbody. Component of the exocyst complex involved in the docking of exocytic vesicles with fusion sites on the plasma membrane. The protein is Exocyst complex component 5 (Exoc5) of Rattus norvegicus (Rat).